An 81-amino-acid polypeptide reads, in one-letter code: Neuronatin (81 aa).

Belongs to the neuronatin family.

May participate in the maintenance of segment identity in the hindbrain and pituitary development, and maturation or maintenance of the overall structure of the nervous system. May function as a regulatory subunit of ion channels. The protein is Neuronatin (NNAT) of Homo sapiens (Human).